Reading from the N-terminus, the 2726-residue chain is Filamin-C (2726 aa).

The segment at Met1–Lys260 is actin-binding. The residue at position 5 (Ser5) is a Phosphoserine. Calponin-homology (CH) domains follow at residues Lys37–Ser143 and Gln160–Leu263. Filamin repeat units follow at residues Ser271–Val369, Met371–Val469, Ala470–Val566, Ser567–Ile659, Pro663–Val759, Gly760–Val862, Asp863–Val961, Ala962–Gly1057, Val1058–Ile1150, Gln1151–Val1245, Gln1246–Val1345, Thr1346–Val1438, Lys1439–Val1534, Leu1535–Ala1631, and Asp1636–Ala1735. The residue at position 1003 (Arg1003) is an Omega-N-methylarginine. 2 positions are modified to phosphoserine: Ser1162 and Ser1339. The interval Cys1736–Arg1759 is hinge 1. Filamin repeat units follow at residues Pro1760–Val1855, Asp1856–Ile1947, Thr1948–Val2034, and Ser2037–Val2129. Residue Ser2043 is modified to Phosphoserine. The tract at residues Gly2163–Gly2244 is intradomain insert; mediate targeting to Z lines. The segment covering Glu2193–Glu2210 has biased composition (basic and acidic residues). The segment at Glu2193–Val2214 is disordered. A Filamin 20; mediates interaction with XIRP1 repeat occupies Thr2212–Val2307. Residues Ser2234 and Ser2237 each carry the phosphoserine modification. At Thr2239 the chain carries Phosphothreonine. Positions Gln2241–Gly2260 are enriched in polar residues. A disordered region spans residues Gln2241–Lys2261. Filamin repeat units follow at residues Leu2310–Val2402, Ser2404–Val2497, and Ser2501–Val2593. The segment at Ser2404 to Val2725 is interaction with INPPL1. Phosphoserine occurs at positions 2587, 2618, 2621, 2633, 2715, and 2719. Residues Thr2594–Pro2630 are hinge 2. The interval Thr2594–Pro2726 is self-association site, tail. One copy of the Filamin 24 repeat lies at Lys2631–Val2725.

The protein belongs to the filamin family. Homodimer; the filamin repeat 24 and the second hinge domain are important for dimer formation. Interacts with FLNB, INPPL1, ITGB1A, KCND2, MYOT, MYOZ1 and MYOZ3. Interacts with sarcoglycans SGCD and SGCG. Interacts (via filament repeats 17-18, 20-21 and 24) with USP25 (isoform USP25m only). Interacts with FBLIM1. Interacts with XIRP1; this interaction is mediated by filamin 20 repeat. Interacts with KY. Interacts with IGFN1. Interacts with MICALL2. Interacts with ANK3. Interacts with MICALL2. Interacts with ANK3. Interacts with SYNPO2. In terms of processing, ubiquitinated by FBXL22, leading to proteasomal degradation.

It is found in the cytoplasm. It localises to the membrane. The protein localises to the cytoskeleton. Its subcellular location is the myofibril. The protein resides in the sarcomere. It is found in the z line. Muscle-specific filamin, which plays a central role in sarcomere assembly and organization. Critical for normal myogenesis, it probably functions as a large actin-cross-linking protein with structural functions at the Z lines in muscle cells. May be involved in reorganizing the actin cytoskeleton in response to signaling events. This chain is Filamin-C (Flnc), found in Mus musculus (Mouse).